Here is a 278-residue protein sequence, read N- to C-terminus: Bifunctional protein FolD (278 aa).

NADP(+) contacts are provided by residues 165–167 and Ser-190; that span reads GRS.

This sequence belongs to the tetrahydrofolate dehydrogenase/cyclohydrolase family. Homodimer.

It catalyses the reaction (6R)-5,10-methylene-5,6,7,8-tetrahydrofolate + NADP(+) = (6R)-5,10-methenyltetrahydrofolate + NADPH. The enzyme catalyses (6R)-5,10-methenyltetrahydrofolate + H2O = (6R)-10-formyltetrahydrofolate + H(+). Its pathway is one-carbon metabolism; tetrahydrofolate interconversion. Functionally, catalyzes the oxidation of 5,10-methylenetetrahydrofolate to 5,10-methenyltetrahydrofolate and then the hydrolysis of 5,10-methenyltetrahydrofolate to 10-formyltetrahydrofolate. The sequence is that of Bifunctional protein FolD from Clostridium tetani (strain Massachusetts / E88).